The following is a 362-amino-acid chain: Phospho-N-acetylmuramoyl-pentapeptide-transferase (362 aa).

10 consecutive transmembrane segments (helical) span residues 28-48, 72-92, 94-114, 131-151, 169-189, 200-220, 236-256, 264-284, 290-310, and 339-359; these read IISF…VITW, TPTM…MVCA, LSNI…ILGL, VLHK…IIFM, FMPQ…VGTS, GLAI…AWIS, FSGE…GFLW, IFMG…IAVL, LLLI…LQVI, and IIVR…ITLK.

Belongs to the glycosyltransferase 4 family. MraY subfamily. Mg(2+) is required as a cofactor.

The protein localises to the cell inner membrane. It catalyses the reaction UDP-N-acetyl-alpha-D-muramoyl-L-alanyl-gamma-D-glutamyl-meso-2,6-diaminopimeloyl-D-alanyl-D-alanine + di-trans,octa-cis-undecaprenyl phosphate = di-trans,octa-cis-undecaprenyl diphospho-N-acetyl-alpha-D-muramoyl-L-alanyl-D-glutamyl-meso-2,6-diaminopimeloyl-D-alanyl-D-alanine + UMP. The protein operates within cell wall biogenesis; peptidoglycan biosynthesis. In terms of biological role, catalyzes the initial step of the lipid cycle reactions in the biosynthesis of the cell wall peptidoglycan: transfers peptidoglycan precursor phospho-MurNAc-pentapeptide from UDP-MurNAc-pentapeptide onto the lipid carrier undecaprenyl phosphate, yielding undecaprenyl-pyrophosphoryl-MurNAc-pentapeptide, known as lipid I. The polypeptide is Phospho-N-acetylmuramoyl-pentapeptide-transferase (Blochmanniella pennsylvanica (strain BPEN)).